The following is a 300-amino-acid chain: RNA polymerase sigma factor RpoH (300 aa).

A sigma-70 factor domain-2 region spans residues 53–122 (LVTSHLRLVA…IQEYILRSWS (70 aa)). Residues 77 to 80 (EVVS) carry the Interaction with polymerase core subunit RpoC motif. The tract at residues 231 to 282 (AMGVLNDRERRIFEARRLAEDPVTLEELSSEFDISRERVRQIEVRAFEKVQE) is sigma-70 factor domain-4. Residues 255 to 274 (LEELSSEFDISRERVRQIEV) constitute a DNA-binding region (H-T-H motif).

This sequence belongs to the sigma-70 factor family. RpoH subfamily. Interacts with the RNA polymerase core enzyme.

It localises to the cytoplasm. Sigma factors are initiation factors that promote the attachment of RNA polymerase to specific initiation sites and are then released. This sigma factor is involved in regulation of expression of heat shock genes. This Rhizobium radiobacter (Agrobacterium tumefaciens) protein is RNA polymerase sigma factor RpoH.